Consider the following 295-residue polypeptide: Acetyl-coenzyme A carboxylase carboxyl transferase subunit beta (295 aa).

The tract at residues 1–20 is disordered; sequence MSWLSKLMPSGIRTENTPAK. A CoA carboxyltransferase N-terminal domain is found at 28 to 295; sequence LWEKCSNCGS…QPHPQDADAA (268 aa). 4 residues coordinate Zn(2+): C32, C35, C51, and C54. The C4-type zinc finger occupies 32 to 54; it reads CSNCGSALYGPELEENLEVCPKC.

This sequence belongs to the AccD/PCCB family. In terms of assembly, acetyl-CoA carboxylase is a heterohexamer composed of biotin carboxyl carrier protein (AccB), biotin carboxylase (AccC) and two subunits each of ACCase subunit alpha (AccA) and ACCase subunit beta (AccD). It depends on Zn(2+) as a cofactor.

It is found in the cytoplasm. The enzyme catalyses N(6)-carboxybiotinyl-L-lysyl-[protein] + acetyl-CoA = N(6)-biotinyl-L-lysyl-[protein] + malonyl-CoA. Its pathway is lipid metabolism; malonyl-CoA biosynthesis; malonyl-CoA from acetyl-CoA: step 1/1. Component of the acetyl coenzyme A carboxylase (ACC) complex. Biotin carboxylase (BC) catalyzes the carboxylation of biotin on its carrier protein (BCCP) and then the CO(2) group is transferred by the transcarboxylase to acetyl-CoA to form malonyl-CoA. This chain is Acetyl-coenzyme A carboxylase carboxyl transferase subunit beta, found in Xanthomonas campestris pv. campestris (strain B100).